The sequence spans 375 residues: Ribonuclease D (375 aa).

Residues 3-169 (YQMITTDDAL…LPITAKLMVE (167 aa)) enclose the 3'-5' exonuclease domain. Positions 210 to 289 (RTRQLACLQL…EKAQTLPEDA (80 aa)) constitute an HRDC domain.

This sequence belongs to the RNase D family. The cofactor is a divalent metal cation.

The protein localises to the cytoplasm. The catalysed reaction is Exonucleolytic cleavage that removes extra residues from the 3'-terminus of tRNA to produce 5'-mononucleotides.. Exonuclease involved in the 3' processing of various precursor tRNAs. Initiates hydrolysis at the 3'-terminus of an RNA molecule and releases 5'-mononucleotides. The protein is Ribonuclease D of Escherichia coli (strain K12).